Reading from the N-terminus, the 424-residue chain is Serine--tRNA ligase (424 aa).

Position 231 to 233 (231 to 233 (TAE)) interacts with L-serine. 262–264 (RSE) serves as a coordination point for ATP. Glutamate 285 is a binding site for L-serine. 349–352 (EISS) contributes to the ATP binding site. Position 385 (serine 385) interacts with L-serine.

This sequence belongs to the class-II aminoacyl-tRNA synthetase family. Type-1 seryl-tRNA synthetase subfamily. As to quaternary structure, homodimer. The tRNA molecule binds across the dimer.

It is found in the cytoplasm. The catalysed reaction is tRNA(Ser) + L-serine + ATP = L-seryl-tRNA(Ser) + AMP + diphosphate + H(+). It carries out the reaction tRNA(Sec) + L-serine + ATP = L-seryl-tRNA(Sec) + AMP + diphosphate + H(+). It functions in the pathway aminoacyl-tRNA biosynthesis; selenocysteinyl-tRNA(Sec) biosynthesis; L-seryl-tRNA(Sec) from L-serine and tRNA(Sec): step 1/1. Its function is as follows. Catalyzes the attachment of serine to tRNA(Ser). Is also able to aminoacylate tRNA(Sec) with serine, to form the misacylated tRNA L-seryl-tRNA(Sec), which will be further converted into selenocysteinyl-tRNA(Sec). In Bacillus cereus (strain ATCC 10987 / NRS 248), this protein is Serine--tRNA ligase.